A 367-amino-acid polypeptide reads, in one-letter code: Leucine-rich repeat-containing protein 28 (367 aa).

LRR repeat units lie at residues 16–36 (KHKN…ELLK), 42–63 (YLER…LAQK), 66–87 (NLVE…IGSL), 89–111 (KLQS…GRLK), 112–133 (SLRH…IGKL), 135–156 (ELQT…LYQC), 158–179 (SLQY…LCQL), 181–202 (SLNE…LGRS), and 204–226 (ELQY…LYNK).

This is Leucine-rich repeat-containing protein 28 (lrrc28) from Xenopus tropicalis (Western clawed frog).